The following is a 239-amino-acid chain: UDP-2,3-diacylglucosamine hydrolase (239 aa).

Asp9, His11, Asp42, Asn80, and His115 together coordinate Mn(2+). 80–81 (NR) is a substrate binding site. Substrate-binding residues include Asp123, Ser161, Lys165, Lys168, and His196. Positions 196 and 198 each coordinate Mn(2+).

This sequence belongs to the LpxH family. Mn(2+) serves as cofactor.

It localises to the cell inner membrane. The enzyme catalyses UDP-2-N,3-O-bis[(3R)-3-hydroxytetradecanoyl]-alpha-D-glucosamine + H2O = 2-N,3-O-bis[(3R)-3-hydroxytetradecanoyl]-alpha-D-glucosaminyl 1-phosphate + UMP + 2 H(+). The protein operates within glycolipid biosynthesis; lipid IV(A) biosynthesis; lipid IV(A) from (3R)-3-hydroxytetradecanoyl-[acyl-carrier-protein] and UDP-N-acetyl-alpha-D-glucosamine: step 4/6. Hydrolyzes the pyrophosphate bond of UDP-2,3-diacylglucosamine to yield 2,3-diacylglucosamine 1-phosphate (lipid X) and UMP by catalyzing the attack of water at the alpha-P atom. Involved in the biosynthesis of lipid A, a phosphorylated glycolipid that anchors the lipopolysaccharide to the outer membrane of the cell. The polypeptide is UDP-2,3-diacylglucosamine hydrolase (Pasteurella multocida (strain Pm70)).